The following is a 392-amino-acid chain: HORMA domain-containing protein 1 (392 aa).

An HORMA domain is found at 25 to 227; sequence QQSLMFVKRL…TPFHTFRLKV (203 aa). Disordered stretches follow at residues 271–292 and 371–392; these read IKTK…EPNL and LESS…NEHT. Position 374 is a phosphoserine (S374). Positions 381 to 384 match the Nuclear localization signal motif; that stretch reads KRRR.

As to quaternary structure, interacts with HORMAD2. Interacts with IHO1. In terms of processing, phosphorylated at Ser-375 in a SPO11-dependent manner.

The protein localises to the nucleus. It is found in the chromosome. Its function is as follows. Plays a key role in meiotic progression. Regulates 3 different functions during meiosis: ensures that sufficient numbers of processed DNA double-strand breaks (DSBs) are available for successful homology search by increasing the steady-state numbers of single-stranded DSB ends. Promotes synaptonemal-complex formation independently of its role in homology search. Plays a key role in the male mid-pachytene checkpoint and the female meiotic prophase checkpoint: required for efficient build-up of ATR activity on unsynapsed chromosome regions, a process believed to form the basis of meiotic silencing of unsynapsed chromatin (MSUC) and meiotic prophase quality control in both sexes. This Rattus norvegicus (Rat) protein is HORMA domain-containing protein 1 (Hormad1).